We begin with the raw amino-acid sequence, 421 residues long: Serine hydroxymethyltransferase (421 aa).

(6S)-5,6,7,8-tetrahydrofolate-binding positions include leucine 120 and 124–126 (GHL). Lysine 229 is modified (N6-(pyridoxal phosphate)lysine). (6S)-5,6,7,8-tetrahydrofolate is bound at residue 354–356 (SPF).

Belongs to the SHMT family. In terms of assembly, homodimer. The cofactor is pyridoxal 5'-phosphate.

It localises to the cytoplasm. It catalyses the reaction (6R)-5,10-methylene-5,6,7,8-tetrahydrofolate + glycine + H2O = (6S)-5,6,7,8-tetrahydrofolate + L-serine. The protein operates within one-carbon metabolism; tetrahydrofolate interconversion. Its pathway is amino-acid biosynthesis; glycine biosynthesis; glycine from L-serine: step 1/1. Catalyzes the reversible interconversion of serine and glycine with tetrahydrofolate (THF) serving as the one-carbon carrier. This reaction serves as the major source of one-carbon groups required for the biosynthesis of purines, thymidylate, methionine, and other important biomolecules. Also exhibits THF-independent aldolase activity toward beta-hydroxyamino acids, producing glycine and aldehydes, via a retro-aldol mechanism. This Opitutus terrae (strain DSM 11246 / JCM 15787 / PB90-1) protein is Serine hydroxymethyltransferase.